The sequence spans 64 residues: MENTSITIEFSSKFWPYFTLIHMITTIISLLIIISIMTAILNKLCEYNVFHNKTFELPRARVNT.

Residues 6 to 15 (ITIEFSSKFW) form an interaction with host BCAP31 region. Residues 20 to 40 (LIHMITTIISLLIIISIMTAI) traverse the membrane as a helical segment. Residues 38–43 (TAILNK) form an interaction with small-molecule inhibitor region. Asn-52 carries N-linked (GlcNAc...) asparagine; by host glycosylation.

This sequence belongs to the orthopneumovirus small hydrophobic protein family. Homopentamer forming a funnel-like pore. Interacts with glycoprotein G; this interaction occurs on the surface of virion particles and infected cells. Interacts with host BCAP31 (via C-terminus); this interaction is direct. Post-translationally, four species of SH have been detected in infected cell cytoplasm: a 7.5 kDa non-glycosylated form (SH0), a 13-15 kDa form that contains one or two N-linked carbohydrate side chains of the high-mannose type (SHg), a 21-30 kDa polylactosaminoglycan-modified form of the protein (SHp), and the isoform generated by alternative translational initiation. Of these different forms, SH0 is by far the most abundant protein detected during virus infection. Tyrosine phosphorylated.

The protein resides in the virion membrane. It localises to the host cell membrane. It is found in the host Golgi apparatus membrane. Its subcellular location is the host endoplasmic reticulum membrane. With respect to regulation, channel activity is inhibited by copper. Also inhibited by small-molecule pyronin B. In terms of biological role, viroporin that forms a homopentameric ion channel displaying low ion selectivity. May play a role in virus morphogenesis and pathogenicity at various stages of the viral life cycle. Accumulates at the membrane of the Golgi apparatus in infected cells and may facilitate virus release by modifying the secretory pathway. May enhance host membrane permeability and disrupt cellular ion homeostasis, which can be sensed as damage-associated molecular patterns/danger signals, triggering NLRP3 inflammasome activation and inflammatory immune response. Also inhibits host TNFA-mediated signaling pathway and may delay apoptosis, allowing time for the virus to replicate. This chain is Small hydrophobic protein (SH), found in Homo sapiens (Human).